Reading from the N-terminus, the 93-residue chain is MPRSLKKGPFVDDHLQAKVDVQNEKGTKQVIKTWSRRSTITPDFIGHTFAVHDGRKHVPVFVSENMVGHKLGEFAPTRTFKSHVKEDRKSKRR.

Belongs to the universal ribosomal protein uS19 family.

Its function is as follows. Protein S19 forms a complex with S13 that binds strongly to the 16S ribosomal RNA. This is Small ribosomal subunit protein uS19 from Nocardia farcinica (strain IFM 10152).